A 359-amino-acid chain; its full sequence is Guanine nucleotide-binding protein G(q) subunit alpha (359 aa).

Residues Cys9 and Cys10 are each lipidated (S-palmitoyl cysteine). The region spanning 38-359 (RELKLLLLGT…QLNLKEYNLV (322 aa)) is the G-alpha domain. The G1 motif stretch occupies residues 41–54 (KLLLLGTGESGKST). The GTP site is built by Ser50, Gly51, Lys52, Ser53, Thr54, Ser156, Leu180, Arg181, and Arg183. Position 53 (Ser53) interacts with Mg(2+). A G2 motif region spans residues 178 to 186 (DVLRVRVPT). Residue Thr186 coordinates Mg(2+). The G3 motif stretch occupies residues 201-210 (FRMVDVGGQR). Gln209 is subject to 5-glutamyl histamine. The G4 motif stretch occupies residues 270–277 (ILFLNKKD). Positions 274, 275, 277, and 331 each coordinate GTP. A G5 motif region spans residues 329 to 334 (TCATDT).

The protein belongs to the G-alpha family. G(q) subfamily. As to quaternary structure, g proteins are composed of 3 units; alpha, beta and gamma. The alpha chain contains the guanine nucleotide binding site. Interacts (GDP-bound form) with RIC8A (via C-terminus); promoting GNAQ folding and association with the plasma membrane. Binds NHERF1. Forms a complex with PECAM1 and BDKRB2. Interacts with GAS2L2. In terms of processing, palmitoylated by ZDHHC3 and ZDHHC7. Palmitoylation occurs in the Golgi and participates in the localization of GNAQ to the plasma membrane. Histaminylated at Gln-209 residues by TGM2.

It is found in the cell membrane. The protein resides in the golgi apparatus. Its subcellular location is the nucleus. The protein localises to the nucleus membrane. The catalysed reaction is GTP + H2O = GDP + phosphate + H(+). In terms of biological role, guanine nucleotide-binding proteins (G proteins) function as transducers downstream of G protein-coupled receptors (GPCRs) in numerous signaling cascades. The alpha chain contains the guanine nucleotide binding site and alternates between an active, GTP-bound state and an inactive, GDP-bound state. Signaling by an activated GPCR promotes GDP release and GTP binding. The alpha subunit has a low GTPase activity that converts bound GTP to GDP, thereby terminating the signal. Both GDP release and GTP hydrolysis are modulated by numerous regulatory proteins. Signaling is mediated via phospholipase C-beta-dependent inositol lipid hydrolysis for signal propagation: activates phospholipase C-beta: following GPCR activation, GNAQ activates PLC-beta (PLCB1, PLCB2, PLCB3 or PLCB4), leading to production of diacylglycerol (DAG) and inositol 1,4,5-trisphosphate (IP3). Required for platelet activation. Regulates B-cell selection and survival and is required to prevent B-cell-dependent autoimmunity. Regulates chemotaxis of BM-derived neutrophils and dendritic cells (in vitro). Transduces FFAR4 signaling in response to long-chain fatty acids (LCFAs). Together with GNA11, required for heart development. This chain is Guanine nucleotide-binding protein G(q) subunit alpha (Gnaq), found in Mus musculus (Mouse).